We begin with the raw amino-acid sequence, 539 residues long: MLEVSTLRSPKADQRAGVGGHHVVGFVPAPPSPADVADEVDAFIVDDSCLLEYIDFSCCDVPFFHADDGDILPDLEVDPTELLAEFASSPDDEPPPTTSAPGPGEPAAAAGAKEDVKEDGAAAAAAAAAADYDGSPPPPRGKKKKDDEERSSSLPEEKDAKNGGGDEVLSAVTTEDSSAGAAKSCSPSAEGHSKRKPSSSSSSAAAGKNSHGKRKVKVDWTPELHRRFVQAVEQLGIDKAVPSRILELMGIECLTRHNIASHLQKYRSHRKHLMAREAEAASWTQKRQMYTAAAAAAAVAAGGGPRKDAAAATAAVAPWVMPTIGFPPPHAAAMVPPPPHPPPFCRPPLHVWGHPTAGVEPTTAAAPPPPSPHAQPPLLPVWPRHLAPPPPPLPAAWAHGHQPAPVDPAAYWQQQYNAARKWGPQAVTPGTPCMPPPLPPAAMLQRFPVPPVPGMVPHPMYRPIPPPSPPQGNKLAALQLQLDAHPSKESIDAAIGDVLVKPWLPLPLGLKPPSLDSVMSELHKQGIPKVPPAASGAAG.

The tract at residues 86 to 218 is disordered; it reads FASSPDDEPP…NSHGKRKVKV (133 aa). Low complexity-rich tracts occupy residues 99–111 and 121–130; these read SAPG…AAAG and AAAAAAAAAA. Positions 144–161 are enriched in basic and acidic residues; that stretch reads KKDDEERSSSLPEEKDAK. The HTH myb-type domain occupies 212 to 271; that stretch reads GKRKVKVDWTPELHRRFVQAVEQLGIDKAVPSRILELMGIECLTRHNIASHLQKYRSHRK. The H-T-H motif DNA-binding region spans 242–267; it reads PSRILELMGIECLTRHNIASHLQKYR.

In terms of tissue distribution, expressed in leaves.

Its subcellular location is the nucleus. In terms of biological role, probable transcriptional activator that promotes chloroplast development. Acts as an activator of nuclear photosynthetic genes involved in chlorophyll biosynthesis, light harvesting, and electron transport. The protein is Probable transcription factor GLK2 (GLK2) of Oryza sativa subsp. japonica (Rice).